A 512-amino-acid polypeptide reads, in one-letter code: Dihydroniloticin synthase CYP71CD2 (512 aa).

Residues 1 to 21 form a helical membrane-spanning segment; it reads MNLQLDYFSITSFLVFLVVLF. N436 contributes to the heme binding site.

Belongs to the cytochrome P450 family. Requires heme as cofactor. Mainly expressed in petioles and roots, and, to a lower extent, in leaves.

It is found in the membrane. It catalyses the reaction tirucalla-7,24-dien-3beta-ol + 2 reduced [NADPH--hemoprotein reductase] + 2 O2 = dihydroniloticin + 2 oxidized [NADPH--hemoprotein reductase] + 2 H2O + 2 H(+). Its pathway is secondary metabolite biosynthesis; terpenoid biosynthesis. Functionally, monooxygenase involved in the biosynthesis of limonoids triterpene natural products such as azadirachtin, an antifeedant widely used as bioinsecticide, and possessing many medicinal applications including anti-tumoral, anti-malarial, anti-rheumatic, antibacterial, anti-inflammatory, anti-pyretic and diuretic effects. Catalyzes the conversion of tirucalladienol to dihydroniloticin. The protein is Dihydroniloticin synthase CYP71CD2 of Melia azedarach (Chinaberry tree).